The following is a 399-amino-acid chain: Digeranylgeranylglycerophospholipid reductase (399 aa).

Residues G15, E34, C45, A46, G48, R99, A123, D280, G292, and I293 each coordinate FAD.

Belongs to the geranylgeranyl reductase family. DGGGPL reductase subfamily. FAD is required as a cofactor.

It carries out the reaction a 2,3-bis-O-phytanyl-sn-glycerol 1-phospholipid + 8 oxidized 2[4Fe-4S]-[ferredoxin] = a 2,3-bis-O-(geranylgeranyl)-sn-glycerol 1-phospholipid + 8 reduced 2[4Fe-4S]-[ferredoxin] + 16 H(+). The catalysed reaction is 2,3-bis-O-(phytanyl)-sn-glycerol 1-phosphate + 8 oxidized 2[4Fe-4S]-[ferredoxin] = 2,3-bis-O-(geranylgeranyl)-sn-glycerol 1-phosphate + 8 reduced 2[4Fe-4S]-[ferredoxin] + 16 H(+). It catalyses the reaction a 2,3-bis-O-phytanyl-sn-glycerol 1-phospholipid + 8 A = a 2,3-bis-O-(geranylgeranyl)-sn-glycerol 1-phospholipid + 8 AH2. The enzyme catalyses CDP-2,3-bis-O-(geranylgeranyl)-sn-glycerol + 8 AH2 = CDP-2,3-bis-O-(phytanyl)-sn-glycerol + 8 A. It carries out the reaction archaetidylserine + 8 AH2 = 2,3-bis-O-phytanyl-sn-glycero-3-phospho-L-serine + 8 A. It functions in the pathway membrane lipid metabolism; glycerophospholipid metabolism. Its function is as follows. Is involved in the reduction of 2,3-digeranylgeranylglycerophospholipids (unsaturated archaeols) into 2,3-diphytanylglycerophospholipids (saturated archaeols) in the biosynthesis of archaeal membrane lipids. Catalyzes the formation of archaetidic acid (2,3-di-O-phytanyl-sn-glyceryl phosphate) from 2,3-di-O-geranylgeranylglyceryl phosphate (DGGGP) via the hydrogenation of each double bond of the isoprenoid chains. Is also probably able to reduce double bonds of geranyl groups in CDP-2,3-bis-O-(geranylgeranyl)-sn-glycerol and archaetidylserine, thus acting at various stages in the biosynthesis of archaeal membrane lipids. This Methanosphaerula palustris (strain ATCC BAA-1556 / DSM 19958 / E1-9c) protein is Digeranylgeranylglycerophospholipid reductase.